A 273-amino-acid chain; its full sequence is MKAFNTSWADEVDADYVDGLPPSNEYIEGDYKYVTEYKFNDDGKKVKVVRTFKIEKQIVPKAVARRRSWVKFGDSRLDKPGPNSQTTMASEEIFMQFIGSKEFDQTHETQLDPGKNIAKCRICNGEHWSVNCPYKGTSMDSKTMMETKANAAAAAAISDPSKTGKYVPPFMKDGGGGPGGKNWGRGRERDDSSAVRISNLSESMTEADLEELVKKIGPHTKMYLAREKNTGLCKGFAYVHFKFRQDAAAAIEVLNGHGYDHLILCVEWSKPQP.

A disordered region spans residues 165 to 193 (KYVPPFMKDGGGGPGGKNWGRGRERDDSS). Positions 173–183 (DGGGGPGGKNW) are enriched in gly residues. The RRM domain maps to 193-271 (SAVRISNLSE…LILCVEWSKP (79 aa)).

Belongs to the eIF-3 subunit G family. In terms of assembly, component of the eukaryotic translation initiation factor 3 (eIF-3) complex. The eIF-3 complex interacts with pix.

The protein resides in the cytoplasm. RNA-binding component of the eukaryotic translation initiation factor 3 (eIF-3) complex, which is involved in protein synthesis of a specialized repertoire of mRNAs and, together with other initiation factors, stimulates binding of mRNA and methionyl-tRNAi to the 40S ribosome. The eIF-3 complex specifically targets and initiates translation of a subset of mRNAs involved in cell proliferation. This subunit can bind 18S rRNA. The sequence is that of Eukaryotic translation initiation factor 3 subunit G-2 from Drosophila yakuba (Fruit fly).